The following is a 358-amino-acid chain: L-tryptophan methyltransferase trpM (358 aa).

This sequence belongs to the methyltransferase superfamily.

The catalysed reaction is L-tryptophan + S-adenosyl-L-methionine = N(alpha)-methyl-L-tryptophan + S-adenosyl-L-homocysteine + H(+). It carries out the reaction N(alpha)-methyl-L-tryptophan + S-adenosyl-L-methionine = N(alpha),N(alpha)-dimethyl-L-tryptophan + S-adenosyl-L-homocysteine + H(+). The enzyme catalyses N(alpha),N(alpha)-dimethyl-L-tryptophan + S-adenosyl-L-methionine = N(alpha),N(alpha),N(alpha)-trimethyl-L-tryptophan + S-adenosyl-L-homocysteine + H(+). Functionally, methyltransferase that catalyzes iterative L-tryptophan N-methylations to produce L-abrine (N-alpha-methyl-L-tryptophan) and N,N-alpha-dimethyl-L-tryptophan. Also catalyzes a third methylation to yield L-hypaphorine (N,N,N-alpha-trimethyl-L-tryptopan), an agonist of the phytohormone indole-3-acetic acid. Can also N-methylate the non-native amino acid substrate 4-hydroxytryptophan, but the ability to incorporate trpM into a functional psilocybin biosynthesis pathway is indeed thwarted by the inability of the L-tryptophan decarboxylase psiD to use N,N-dimethyl-4-hydroxytryptophan as substrate. In Psilocybe serbica, this protein is L-tryptophan methyltransferase trpM.